The chain runs to 755 residues: Catalase-peroxidase (755 aa).

Positions 91 to 245 (WHSAGTYRTA…LAAVQMGLIY (155 aa)) form a cross-link, tryptophyl-tyrosyl-methioninium (Trp-Tyr) (with M-271). Residue His92 is the Proton acceptor of the active site. Positions 193–229 (DNRYGKDPESMQPPGEGTLVAEPAEHGNEESRTNQGE) are disordered. The segment covering 215 to 224 (PAEHGNEESR) has biased composition (basic and acidic residues). The tryptophyl-tyrosyl-methioninium (Tyr-Met) (with W-91) cross-link spans 245–271 (YVNPEGPEGNPDPVASAKDIRETFGRM). Heme is bound at residue His286.

The protein belongs to the peroxidase family. Peroxidase/catalase subfamily. Homodimer or homotetramer. Requires heme b as cofactor. Post-translationally, formation of the three residue Trp-Tyr-Met cross-link is important for the catalase, but not the peroxidase activity of the enzyme.

It catalyses the reaction H2O2 + AH2 = A + 2 H2O. It carries out the reaction 2 H2O2 = O2 + 2 H2O. Its function is as follows. Bifunctional enzyme with both catalase and broad-spectrum peroxidase activity. The polypeptide is Catalase-peroxidase (Pseudomonas fluorescens (strain Pf0-1)).